Reading from the N-terminus, the 315-residue chain is N-acetylneuraminate lyase (315 aa).

Positions 59 and 60 each coordinate aceneuramate. Tyr-149 acts as the Proton donor in catalysis. Lys-177 serves as the catalytic Schiff-base intermediate with substrate. Residues Ser-179, Gly-202, Asp-204, Glu-205, and Gly-221 each coordinate aceneuramate.

Belongs to the DapA family. NanA subfamily. As to quaternary structure, homotetramer.

Its subcellular location is the cytoplasm. It catalyses the reaction aceneuramate = aldehydo-N-acetyl-D-mannosamine + pyruvate. It functions in the pathway amino-sugar metabolism; N-acetylneuraminate degradation; D-fructose 6-phosphate from N-acetylneuraminate: step 1/5. Catalyzes the reversible aldol cleavage of N-acetylneuraminic acid (sialic acid; Neu5Ac) to form pyruvate and N-acetylmannosamine (ManNAc) via a Schiff base intermediate. Cannot use 2,7-anhydro-Neu5Ac. Involved in the degradation of sialic acid, which is present in the host mucus layer and represents a much-coveted source of nutrients for R.gnavus, a prevalent member of the normal gut microbiota. The sequence is that of N-acetylneuraminate lyase from Mediterraneibacter gnavus (strain ATCC 29149 / DSM 114966 / JCM 6515 / VPI C7-9) (Ruminococcus gnavus).